Consider the following 601-residue polypeptide: Deuterosome assembly protein 1 (601 aa).

3 coiled-coil regions span residues 14-59 (CEAE…NAQT), 86-197 (TQNY…KQQR), and 226-278 (IEKL…LQSR). Disordered stretches follow at residues 115 to 135 (MKQN…PFEL) and 188 to 213 (QTQL…CESS). Residues 121-131 (HRKEASNKDET) are compositionally biased toward basic and acidic residues. The disordered stretch occupies residues 307 to 326 (DNRKRVESSYSPSTKEPERK). Residues 340–397 (HEKELNKMRSQLYQEEDLCSEQERMRNEISELTQELHQKEVTIATIMKKAALLERQLK) adopt a coiled-coil conformation. The residue at position 544 (S544) is a Phosphoserine. A coiled-coil region spans residues 555–586 (AAQHFLMEEEKRAKELEKLLNTHIDELQRHTE).

The protein belongs to the CEP63 family. As to quaternary structure, interacts with CEP152; the interaction is mutually exclusive with CEP63.

The protein localises to the cytoplasm. Its function is as follows. Key structural component of the deuterosome, a structure that promotes de novo centriole amplification in multiciliated cells. Deuterosome-mediated centriole amplification occurs in terminally differentiated multiciliated cells and can generate more than 100 centrioles. Probably sufficient for the specification and formation of the deuterosome inner core. Interacts with CEP152 and recruits PLK4 to activate centriole biogenesis. This is Deuterosome assembly protein 1 from Rattus norvegicus (Rat).